We begin with the raw amino-acid sequence, 122 residues long: Small ribosomal subunit protein uS12 (122 aa).

The segment at 1–24 (MPTINQLIRKKRKSTGKKRTAPAL) is disordered. Basic residues predominate over residues 8 to 20 (IRKKRKSTGKKRT). Asp-89 is subject to 3-methylthioaspartic acid.

It belongs to the universal ribosomal protein uS12 family. Part of the 30S ribosomal subunit. Contacts proteins S8 and S17. May interact with IF1 in the 30S initiation complex.

In terms of biological role, with S4 and S5 plays an important role in translational accuracy. Interacts with and stabilizes bases of the 16S rRNA that are involved in tRNA selection in the A site and with the mRNA backbone. Located at the interface of the 30S and 50S subunits, it traverses the body of the 30S subunit contacting proteins on the other side and probably holding the rRNA structure together. The combined cluster of proteins S8, S12 and S17 appears to hold together the shoulder and platform of the 30S subunit. The protein is Small ribosomal subunit protein uS12 of Natranaerobius thermophilus (strain ATCC BAA-1301 / DSM 18059 / JW/NM-WN-LF).